The primary structure comprises 146 residues: UPF0735 ACT domain-containing protein Teth514_2312 (146 aa).

The ACT domain maps to 71 to 146 (TLSMVLDHMP…GVRKIEILGE (76 aa)).

The protein belongs to the UPF0735 family.

This is UPF0735 ACT domain-containing protein Teth514_2312 from Thermoanaerobacter sp. (strain X514).